Reading from the N-terminus, the 904-residue chain is NADH-quinone oxidoreductase subunit G (904 aa).

A 2Fe-2S ferredoxin-type domain is found at 1 to 83 (MATIHVDGKE…GSWISIDDEE (83 aa)). [2Fe-2S] cluster contacts are provided by Cys-34, Cys-45, Cys-48, and Cys-67. One can recognise a 4Fe-4S His(Cys)3-ligated-type domain in the interval 83–122 (EAKVFRASVVEWLMTNHPHDCPVCEEGGHCHLQDMTVMTG). The [4Fe-4S] cluster site is built by His-99, Cys-103, Cys-106, Cys-112, Cys-151, Cys-154, Cys-157, Cys-201, Cys-228, Cys-231, Cys-235, and Cys-263. Residues 221 to 277 (MQFSPSICHGCSSGCNISPGERYGELRRIENRFNGSVNQYFLCDRGRFGYGYVNRKD) form the 4Fe-4S Mo/W bis-MGD-type domain.

This sequence belongs to the complex I 75 kDa subunit family. Composed of 13 different subunits. Subunits NuoCD, E, F, and G constitute the peripheral sector of the complex. Requires [2Fe-2S] cluster as cofactor. The cofactor is [4Fe-4S] cluster.

It catalyses the reaction a quinone + NADH + 5 H(+)(in) = a quinol + NAD(+) + 4 H(+)(out). NDH-1 shuttles electrons from NADH, via FMN and iron-sulfur (Fe-S) centers, to quinones in the respiratory chain. The immediate electron acceptor for the enzyme in this species is believed to be ubiquinone. Couples the redox reaction to proton translocation (for every two electrons transferred, four hydrogen ions are translocated across the cytoplasmic membrane), and thus conserves the redox energy in a proton gradient. Required for plants roots colonization. The protein is NADH-quinone oxidoreductase subunit G (nuoG) of Pseudomonas fluorescens.